Here is a 226-residue protein sequence, read N- to C-terminus: UPF0758 protein PputW619_0186 (226 aa).

The MPN domain occupies 102–224 (ALESPSAVRR…PLSMVEQGWI (123 aa)). Positions 173, 175, and 186 each coordinate Zn(2+). A JAMM motif motif is present at residues 173–186 (HNHPSGNSEPSQDD).

Belongs to the UPF0758 family.

The sequence is that of UPF0758 protein PputW619_0186 from Pseudomonas putida (strain W619).